Consider the following 127-residue polypeptide: Large ribosomal subunit protein bL17 (127 aa).

It belongs to the bacterial ribosomal protein bL17 family. As to quaternary structure, part of the 50S ribosomal subunit. Contacts protein L32.

This is Large ribosomal subunit protein bL17 from Salmonella paratyphi A (strain AKU_12601).